A 635-amino-acid polypeptide reads, in one-letter code: Threonine--tRNA ligase (635 aa).

The 62-residue stretch at 1–62 (MITITLPDGS…EHDAMLRIIT (62 aa)) folds into the TGS domain. The catalytic stretch occupies residues 244–535 (DHRKIGKVQD…LIEHYAGIWP (292 aa)). C335, H386, and H512 together coordinate Zn(2+).

It belongs to the class-II aminoacyl-tRNA synthetase family. Homodimer. Zn(2+) is required as a cofactor.

It is found in the cytoplasm. The catalysed reaction is tRNA(Thr) + L-threonine + ATP = L-threonyl-tRNA(Thr) + AMP + diphosphate + H(+). In terms of biological role, catalyzes the attachment of threonine to tRNA(Thr) in a two-step reaction: L-threonine is first activated by ATP to form Thr-AMP and then transferred to the acceptor end of tRNA(Thr). Also edits incorrectly charged L-seryl-tRNA(Thr). The protein is Threonine--tRNA ligase of Xylella fastidiosa (strain 9a5c).